The sequence spans 152 residues: Ribonuclease HI (152 aa).

The RNase H type-1 domain maps to 1–142 (MDSKVVIYTD…ADKLAVQGRE (142 aa)). Asp10, Glu48, Asp70, and Asp134 together coordinate Mg(2+).

This sequence belongs to the RNase H family. Monomer. It depends on Mg(2+) as a cofactor.

It localises to the cytoplasm. It carries out the reaction Endonucleolytic cleavage to 5'-phosphomonoester.. Its function is as follows. Endonuclease that specifically degrades the RNA of RNA-DNA hybrids. In Rickettsia conorii (strain ATCC VR-613 / Malish 7), this protein is Ribonuclease HI.